A 306-amino-acid chain; its full sequence is Lipid A biosynthesis palmitoleoyltransferase (306 aa).

The chain crosses the membrane as a helical span at residues 20–40 (WFGLGVLWLWVQLPYPVLCFL). An HXXXXD motif motif is present at residues 132–137 (HFMSLE).

The protein belongs to the LpxL/LpxM/LpxP family. LpxP subfamily.

The protein localises to the cell inner membrane. It catalyses the reaction (9Z)-hexadecenoyl-[ACP] + alpha-Kdo-(2-&gt;4)-alpha-Kdo-(2-&gt;6)-lipid IVA (E. coli) = (9Z)-hexadecenoyl-(Kdo)2-lipid IVA (E. coli) + holo-[ACP]. It functions in the pathway bacterial outer membrane biogenesis; lipopolysaccharide biosynthesis. Catalyzes the transfer of palmitoleate from palmitoleoyl-[acyl-carrier-protein] (ACP) to Kdo(2)-lipid IV(A) to form Kdo(2)-(palmitoleoyl)-lipid IV(A). Required for the biosynthesis of a distinct molecular species of lipid A, which is present only in cells grown at low temperatures. It may confer a selective advantage to cells growing at lower temperatures by making the outer membrane a more effective barrier to harmful chemicals. This is Lipid A biosynthesis palmitoleoyltransferase from Escherichia coli (strain K12).